The sequence spans 535 residues: Light-independent protochlorophyllide reductase subunit B (535 aa).

Asp36 provides a ligand contact to [4Fe-4S] cluster. The Proton donor role is filled by Asp292. 428 to 429 (GL) is a substrate binding site.

Belongs to the ChlB/BchB/BchZ family. In terms of assembly, protochlorophyllide reductase is composed of three subunits; BchL, BchN and BchB. Forms a heterotetramer of two BchB and two BchN subunits. [4Fe-4S] cluster is required as a cofactor.

The catalysed reaction is chlorophyllide a + oxidized 2[4Fe-4S]-[ferredoxin] + 2 ADP + 2 phosphate = protochlorophyllide a + reduced 2[4Fe-4S]-[ferredoxin] + 2 ATP + 2 H2O. The protein operates within porphyrin-containing compound metabolism; bacteriochlorophyll biosynthesis (light-independent). In terms of biological role, component of the dark-operative protochlorophyllide reductase (DPOR) that uses Mg-ATP and reduced ferredoxin to reduce ring D of protochlorophyllide (Pchlide) to form chlorophyllide a (Chlide). This reaction is light-independent. The NB-protein (BchN-BchB) is the catalytic component of the complex. The chain is Light-independent protochlorophyllide reductase subunit B from Chlorobaculum parvum (strain DSM 263 / NCIMB 8327) (Chlorobium vibrioforme subsp. thiosulfatophilum).